Consider the following 202-residue polypeptide: LexA repressor (202 aa).

A DNA-binding region (H-T-H motif) is located at residues 28–48; the sequence is RAEIAQQLGFRSPNAAEEHLK. Residues Ser-119 and Lys-156 each act as for autocatalytic cleavage activity in the active site.

It belongs to the peptidase S24 family. As to quaternary structure, homodimer.

It catalyses the reaction Hydrolysis of Ala-|-Gly bond in repressor LexA.. Represses a number of genes involved in the response to DNA damage (SOS response), including recA and lexA. In the presence of single-stranded DNA, RecA interacts with LexA causing an autocatalytic cleavage which disrupts the DNA-binding part of LexA, leading to derepression of the SOS regulon and eventually DNA repair. The chain is LexA repressor from Pectobacterium atrosepticum (strain SCRI 1043 / ATCC BAA-672) (Erwinia carotovora subsp. atroseptica).